The following is a 211-amino-acid chain: Urease accessory protein UreF (211 aa).

Positions L68–Q93 are disordered.

The protein belongs to the UreF family. UreD, UreF and UreG form a complex that acts as a GTP-hydrolysis-dependent molecular chaperone, activating the urease apoprotein by helping to assemble the nickel containing metallocenter of UreC. The UreE protein probably delivers the nickel.

The protein localises to the cytoplasm. Required for maturation of urease via the functional incorporation of the urease nickel metallocenter. The protein is Urease accessory protein UreF of Mycobacterium marinum (strain ATCC BAA-535 / M).